We begin with the raw amino-acid sequence, 91 residues long: Elongation factor 1-beta (91 aa).

The protein belongs to the EF-1-beta/EF-1-delta family.

In terms of biological role, promotes the exchange of GDP for GTP in EF-1-alpha/GDP, thus allowing the regeneration of EF-1-alpha/GTP that could then be used to form the ternary complex EF-1-alpha/GTP/AAtRNA. This chain is Elongation factor 1-beta, found in Thermococcus gammatolerans (strain DSM 15229 / JCM 11827 / EJ3).